Here is a 1037-residue protein sequence, read N- to C-terminus: Probable inorganic carbon transporter subunit DabA 1 (1037 aa).

Cysteine 460, aspartate 462, histidine 719, and cysteine 734 together coordinate Zn(2+).

Belongs to the inorganic carbon transporter (TC 9.A.2) DabA family. Forms a complex with DabB. Zn(2+) is required as a cofactor.

It is found in the cell inner membrane. In terms of biological role, part of an energy-coupled inorganic carbon pump. In Nitrobacter winogradskyi (strain ATCC 25391 / DSM 10237 / CIP 104748 / NCIMB 11846 / Nb-255), this protein is Probable inorganic carbon transporter subunit DabA 1.